The sequence spans 685 residues: DNA ligase (685 aa).

NAD(+) contacts are provided by residues 47–51 (DSEYD), 96–97 (SL), and Glu125. Residue Lys127 is the N6-AMP-lysine intermediate of the active site. Residues Arg148, Glu185, Lys304, and Lys328 each coordinate NAD(+). Cys422, Cys425, Cys440, and Cys446 together coordinate Zn(2+). In terms of domain architecture, BRCT spans 605–685 (AEAQPLKGQT…ELLALLAANA (81 aa)).

It belongs to the NAD-dependent DNA ligase family. LigA subfamily. The cofactor is Mg(2+). Requires Mn(2+) as cofactor.

It carries out the reaction NAD(+) + (deoxyribonucleotide)n-3'-hydroxyl + 5'-phospho-(deoxyribonucleotide)m = (deoxyribonucleotide)n+m + AMP + beta-nicotinamide D-nucleotide.. In terms of biological role, DNA ligase that catalyzes the formation of phosphodiester linkages between 5'-phosphoryl and 3'-hydroxyl groups in double-stranded DNA using NAD as a coenzyme and as the energy source for the reaction. It is essential for DNA replication and repair of damaged DNA. The chain is DNA ligase from Shewanella baltica (strain OS223).